Consider the following 214-residue polypeptide: Homeobox protein HEX homolog pha-2 (214 aa).

2 disordered regions span residues 1 to 50 (MDQK…QKME) and 180 to 214 (RRVRKDGEDEDEMPNGASARSLGQLQSSNPFLSHG). The segment covering 24 to 34 (SSESPIPTGSE) has biased composition (low complexity). The span at 35-44 (CSLNESSDTT) shows a compositional bias: polar residues. A DNA-binding region (homeobox) is located at residues 124–183 (RKGGQIRFTNEQTDALEHKFDSHKYLSPQERKKLAKSLSLSERQVKTWFQNRRAKWRRVR). The span at 200–214 (SLGQLQSSNPFLSHG) shows a compositional bias: polar residues.

It is found in the nucleus. Functionally, transcriptional repressor. Involved in pharyngeal development and required for the formation of the pharyngeal isthmus. Plays a role in modulating cytoskeleton in the muscle cells of the isthmus. Regulates expression of the acetylcholinesterase genes ace-1 and ace-2. May regulate its own expression. The chain is Homeobox protein HEX homolog pha-2 from Caenorhabditis elegans.